Consider the following 139-residue polypeptide: Crossover junction endodeoxyribonuclease Hje (139 aa).

Residues glutamate 10, aspartate 39, and glutamate 52 each contribute to the Mg(2+) site.

It belongs to the Holliday junction resolvase Hjc family. Hje subfamily. In terms of assembly, homodimer. Mg(2+) is required as a cofactor.

The catalysed reaction is Endonucleolytic cleavage at a junction such as a reciprocal single-stranded crossover between two homologous DNA duplexes (Holliday junction).. A structure-specific endonuclease that resolves Holliday junction (HJ) intermediates during genetic recombination. Acts only on 4-way DNA junctions in a sequence non-specific manner; introduces paired nicks in opposing strands 2 bases 3' of the point of strand exchange only on continuous strands of 4-way junction DNA. Cleaves both mobile and immobile junctions. Its function is as follows. Redundant function with Holliday junction resolvase Hjc. The protein is Crossover junction endodeoxyribonuclease Hje of Sulfolobus acidocaldarius (strain ATCC 33909 / DSM 639 / JCM 8929 / NBRC 15157 / NCIMB 11770).